The primary structure comprises 695 residues: Elongation factor G (695 aa).

Residues 10–285 (DKTRNIGIMA…GVVDYLPSPL (276 aa)) enclose the tr-type G domain. GTP is bound by residues 19–26 (AHIDAGKT), 83–87 (DTPGH), and 137–140 (NKMD).

This sequence belongs to the TRAFAC class translation factor GTPase superfamily. Classic translation factor GTPase family. EF-G/EF-2 subfamily.

It localises to the cytoplasm. Catalyzes the GTP-dependent ribosomal translocation step during translation elongation. During this step, the ribosome changes from the pre-translocational (PRE) to the post-translocational (POST) state as the newly formed A-site-bound peptidyl-tRNA and P-site-bound deacylated tRNA move to the P and E sites, respectively. Catalyzes the coordinated movement of the two tRNA molecules, the mRNA and conformational changes in the ribosome. The polypeptide is Elongation factor G (Latilactobacillus sakei subsp. sakei (strain 23K) (Lactobacillus sakei subsp. sakei)).